A 347-amino-acid chain; its full sequence is Protein RecA (347 aa).

67–74 serves as a coordination point for ATP; sequence GPESSGKT.

This sequence belongs to the RecA family.

Its subcellular location is the cytoplasm. In terms of biological role, can catalyze the hydrolysis of ATP in the presence of single-stranded DNA, the ATP-dependent uptake of single-stranded DNA by duplex DNA, and the ATP-dependent hybridization of homologous single-stranded DNAs. It interacts with LexA causing its activation and leading to its autocatalytic cleavage. The polypeptide is Protein RecA (Helicobacter pylori (strain G27)).